A 700-amino-acid polypeptide reads, in one-letter code: Methionine--tRNA ligase (700 aa).

A 'HIGH' region motif is present at residues 13 to 23; it reads PYANGDIHLGH. Residues Cys144, Cys147, Cys157, and Cys160 each contribute to the Zn(2+) site. A 'KMSKS' region motif is present at residues 341 to 345; that stretch reads KMSKS. Lys344 is an ATP binding site. One can recognise a tRNA-binding domain in the interval 598-700; that stretch reads DFAKVEMKVA…DNCVIGDLLA (103 aa).

The protein belongs to the class-I aminoacyl-tRNA synthetase family. MetG type 1 subfamily. Homodimer. It depends on Zn(2+) as a cofactor.

Its subcellular location is the cytoplasm. The catalysed reaction is tRNA(Met) + L-methionine + ATP = L-methionyl-tRNA(Met) + AMP + diphosphate. Is required not only for elongation of protein synthesis but also for the initiation of all mRNA translation through initiator tRNA(fMet) aminoacylation. The sequence is that of Methionine--tRNA ligase from Psychrobacter arcticus (strain DSM 17307 / VKM B-2377 / 273-4).